A 338-amino-acid polypeptide reads, in one-letter code: Bacteriochlorophyllide d C-20 methyltransferase (338 aa).

Glu-147 serves as a coordination point for S-adenosyl-L-methionine. Substrate is bound at residue His-150. S-adenosyl-L-methionine-binding positions include Gly-177, Asn-200, 227–228, and 242–243; these read DI and CR. The active-site Nucleophile is Tyr-246. An a bacteriochlorophyll d-binding site is contributed by His-290.

The protein belongs to the class I-like SAM-binding methyltransferase superfamily. Cation-independent O-methyltransferase family. Homodimer.

It carries out the reaction a bacteriochlorophyllide d + S-adenosyl-L-methionine = a bacteriochlorophyllide c + S-adenosyl-L-homocysteine + H(+). The protein operates within porphyrin-containing compound metabolism; bacteriochlorophyll biosynthesis (light-independent). Its function is as follows. Involved in the biosynthesis of the major light-harvesting pigment bacteriochlorophyll c (BChlc), which confers a significant competitive advantage to green sulfur bacteria living at limiting red and near-infrared light intensities. Catalyzes the methylation at the C-20 position of the cyclic tetrapyrrole chlorin of bacteriochlorophyll d (BChld) to produce bacteriochlorophyll c (BChlc) using S-adenosylmethionine (SAM) as a methyl source. This chain is Bacteriochlorophyllide d C-20 methyltransferase, found in Chlorobaculum tepidum (strain ATCC 49652 / DSM 12025 / NBRC 103806 / TLS) (Chlorobium tepidum).